Consider the following 175-residue polypeptide: MAISPEEILHIAYEELVEIEPMTSIPELRLLERTYPPLMPLDIARIPLYAALLLKKSNMCKIRLPSYLQLESLKMSMDVEIEKADEYSCIHPYFFPLATELLENCYNVESIEESKMIVEKIKEIRLAKTLKGIKCLDGKALNMNNITLFEFNEIKELILGSAEVGRRIEDLAKDQ.

This sequence belongs to the GINS2/PSF2 family. In terms of assembly, component of the GINS complex which is a heterotetramer of SLD5, PSF1, PSF2 and PSF3.

The protein resides in the nucleus. Functionally, the GINS complex plays an essential role in the initiation of DNA replication. The sequence is that of Probable DNA replication complex GINS protein PSF2 from Encephalitozoon cuniculi (strain GB-M1) (Microsporidian parasite).